Reading from the N-terminus, the 494-residue chain is MASGILVNVKEEVTCPICLELLTQPLSLDCGHSFCQACLTANHKTSMPDEGERSCPVCRISYQHKNIQPNRHVANIVEKLREVKLSPEEGQKVDHCARHGEKLLLFCREDRKVICWLCERSQEHRGHHTFLTEEVAQEYQVKLQAALQMLRQKQQEAEELEADIREEKASWKTQIQYDKTNILADFEQLRHILDWVESNELQNLEKEEKDVLKRLMKSEIEMVQQTQSVRELISDLEHRLQGSVMELLQGVDGVIKRMKNVTLKNPETFPKNQRRVFRAADLKVMLKKLRELRDVQHYWVDVTVAPNNISYAVISEDMRQVSSPEPQIIYEAQGTISQTFVNFNYCTGIRGSQSITSGKHYWEVDVSKKSAWILGVCAGFQPDAMYNIEQNENYQPKYGYWVIGLEERVKCNAFQDGSFHTPSAPFIVPLSVNICPDRVGVFLDYEACTLSFFNITNHGFLIYKFSHCSFSQPVFPYLNPRKCTVPMTLCSPSS.

A2 is subject to N-acetylalanine. The RING-type zinc-finger motif lies at 15 to 59 (CPICLELLTQPLSLDCGHSFCQACLTANHKTSMPDEGERSCPVCR). A Phosphoserine modification is found at S86. The segment at 91–133 (QKVDHCARHGEKLLLFCREDRKVICWLCERSQEHRGHHTFLTE) adopts a B box-type zinc-finger fold. 4 residues coordinate Zn(2+): C96, H99, C118, and H124. A coiled-coil region spans residues 132-241 (TEEVAQEYQV…LISDLEHRLQ (110 aa)). The segment at 186-199 (FEQLRHILDWVESN) is required for interaction with GABARAP and for autophagy. Residues 282-494 (LKVMLKKLRE…VPMTLCSPSS (213 aa)) form the B30.2/SPRY domain.

This sequence belongs to the TRIM/RBCC family. Can form homodimers and homotrimers. In addition to lower-order dimerization, also exhibits a higher-order multimerization and both low- and high-order multimerizations are essential for its restriction activity. Interacts with BTBD1 and BTBD2. Interacts with PSMC4, PSMC5, PSMD7 and HSPA8/HSC70. Interacts (via B30.2/SPRY domain) with HSPA1A/B. Interacts with PSMC2, MAP3K7/TAK1, TAB2 and TAB3. Interacts with SQSTM1. Interacts with TRIM6 and TRIM34. Interacts with ULK1 (phosphorylated form), GABARAP, GABARAPL1, GABARAPL2, MAP1LC3A, MAP1LC3C and BECN1. Degraded in a proteasome-independent fashion in the absence of viral infection but in a proteasome-dependent fashion following exposure to restriction sensitive virus. In terms of processing, autoubiquitinated in a RING finger- and UBE2D2-dependent manner. Monoubiquitinated by TRIM21. Deubiquitinated by Yersinia YopJ. Ubiquitination may not lead to proteasomal degradation.

The protein resides in the cytoplasm. Its subcellular location is the nucleus. The enzyme catalyses S-ubiquitinyl-[E2 ubiquitin-conjugating enzyme]-L-cysteine + [acceptor protein]-L-lysine = [E2 ubiquitin-conjugating enzyme]-L-cysteine + N(6)-ubiquitinyl-[acceptor protein]-L-lysine.. It participates in protein modification; protein ubiquitination. Its function is as follows. Capsid-specific restriction factor that prevents infection from non-host-adapted retroviruses. Blocks viral replication early in the life cycle, after viral entry but before reverse transcription. In addition to acting as a capsid-specific restriction factor, also acts as a pattern recognition receptor that activates innate immune signaling in response to the retroviral capsid lattice. Binding to the viral capsid triggers its E3 ubiquitin ligase activity, and in concert with the heterodimeric ubiquitin conjugating enzyme complex UBE2V1-UBE2N (also known as UBC13-UEV1A complex) generates 'Lys-63'-linked polyubiquitin chains, which in turn are catalysts in the autophosphorylation of the MAP3K7/TAK1 complex (includes TAK1, TAB2, and TAB3). Activation of the MAP3K7/TAK1 complex by autophosphorylation results in the induction and expression of NF-kappa-B and MAPK-responsive inflammatory genes, thereby leading to an innate immune response in the infected cell. Plays a role in regulating autophagy through activation of autophagy regulator BECN1 by causing its dissociation from its inhibitors BCL2 and TAB2. This Nomascus leucogenys (Northern white-cheeked gibbon) protein is Tripartite motif-containing protein 5 (TRIM5).